The primary structure comprises 101 residues: Small ribosomal subunit protein uS14 (101 aa).

This sequence belongs to the universal ribosomal protein uS14 family. Part of the 30S ribosomal subunit. Contacts proteins S3 and S10.

In terms of biological role, binds 16S rRNA, required for the assembly of 30S particles and may also be responsible for determining the conformation of the 16S rRNA at the A site. The chain is Small ribosomal subunit protein uS14 from Ehrlichia ruminantium (strain Welgevonden).